Consider the following 123-residue polypeptide: Small ribosomal subunit protein uS12 (123 aa).

The disordered stretch occupies residues 1–21; that stretch reads MPTIEQLVRKGRQAKPKKSKT. The span at 9–20 shows a compositional bias: basic residues; it reads RKGRQAKPKKSK.

It belongs to the universal ribosomal protein uS12 family. Part of the 30S ribosomal subunit. Contacts proteins S8 and S17. May interact with IF1 in the 30S initiation complex.

With S4 and S5 plays an important role in translational accuracy. In terms of biological role, interacts with and stabilizes bases of the 16S rRNA that are involved in tRNA selection in the A site and with the mRNA backbone. Located at the interface of the 30S and 50S subunits, it traverses the body of the 30S subunit contacting proteins on the other side and probably holding the rRNA structure together. The combined cluster of proteins S8, S12 and S17 appears to hold together the shoulder and platform of the 30S subunit. The polypeptide is Small ribosomal subunit protein uS12 (Bifidobacterium longum (strain NCC 2705)).